A 520-amino-acid chain; its full sequence is Maturase K (520 aa).

It belongs to the intron maturase 2 family. MatK subfamily.

It localises to the plastid. It is found in the chloroplast. Its function is as follows. Usually encoded in the trnK tRNA gene intron. Probably assists in splicing its own and other chloroplast group II introns. The chain is Maturase K from Linum perenne (Perennial flax).